The sequence spans 307 residues: MRELVLNCREAQADALSDALLEAGVLSVSVEDADLGTEAERPLFGEPGTEPQVQAWERNCVVALLPDGADPAQILEQAIAAAGLDPALAHGWSLREVPDADWVRLTQSQFGPIPISERLWIVPSWHRDDPAVPGLVPDAARDAIHIELDPGLAFGTGSHPTTHLCLAWLEAELPAGARLLDYGCGSGILAIAARKLGAGETVAVDIDPQAVQSTVDNAEVNQVRLQAMLPDALPAGEFQVVVANILSNPLKVLAPMLAGRVAPGGHLVLSGVLERQADEVAAAYAPWLTMSVWRERDGWVCLHGVKA.

4 residues coordinate S-adenosyl-L-methionine: Thr-162, Gly-183, Asp-205, and Asn-244.

Belongs to the methyltransferase superfamily. PrmA family.

The protein resides in the cytoplasm. It catalyses the reaction L-lysyl-[protein] + 3 S-adenosyl-L-methionine = N(6),N(6),N(6)-trimethyl-L-lysyl-[protein] + 3 S-adenosyl-L-homocysteine + 3 H(+). Methylates ribosomal protein L11. The sequence is that of Ribosomal protein L11 methyltransferase from Bordetella bronchiseptica (strain ATCC BAA-588 / NCTC 13252 / RB50) (Alcaligenes bronchisepticus).